We begin with the raw amino-acid sequence, 1199 residues long: DNA-directed RNA polymerase subunit beta' (1199 aa).

Zn(2+) is bound by residues Cys-60, Cys-62, Cys-75, and Cys-78. The Mg(2+) site is built by Asp-449, Asp-451, and Asp-453. Positions 818, 892, 899, and 902 each coordinate Zn(2+).

This sequence belongs to the RNA polymerase beta' chain family. In terms of assembly, the RNAP catalytic core consists of 2 alpha, 1 beta, 1 beta' and 1 omega subunit. When a sigma factor is associated with the core the holoenzyme is formed, which can initiate transcription. Requires Mg(2+) as cofactor. Zn(2+) serves as cofactor.

The catalysed reaction is RNA(n) + a ribonucleoside 5'-triphosphate = RNA(n+1) + diphosphate. In terms of biological role, DNA-dependent RNA polymerase catalyzes the transcription of DNA into RNA using the four ribonucleoside triphosphates as substrates. This chain is DNA-directed RNA polymerase subunit beta', found in Exiguobacterium sibiricum (strain DSM 17290 / CCUG 55495 / CIP 109462 / JCM 13490 / 255-15).